The primary structure comprises 84 residues: Dolichol phosphate-mannose biosynthesis regulatory protein (84 aa).

2 helical membrane passes run 11-31 (FGLV…VILL) and 49-69 (YAVL…GLFI).

Belongs to the DPM2 family. As to quaternary structure, component of the dolichol-phosphate mannose (DPM) synthase complex composed of DPM1, DPM2 and DPM3; in the complex interacts directly with DPM3. Component of the glycosylphosphatidylinositol-N-acetylglucosaminyltransferase (GPI-GnT) complex composed at least by PIGA, PIGC, PIGH, PIGP, PIGQ, PIGY and DPM2. Interacts with PIGA, PIGC and PIGQ.

It localises to the endoplasmic reticulum membrane. Its pathway is protein modification; protein glycosylation. Regulates the biosynthesis of dolichol phosphate-mannose. Regulatory subunit of the dolichol-phosphate mannose (DPM) synthase complex; essential for the ER localization and stable expression of DPM1. Part of the glycosylphosphatidylinositol-N-acetylglucosaminyltransferase (GPI-GnT) complex that catalyzes the transfer of N-acetylglucosamine from UDP-N-acetylglucosamine to phosphatidylinositol and participates in the first step of GPI biosynthesis. May act by regulating the GPI-GNT complex. The sequence is that of Dolichol phosphate-mannose biosynthesis regulatory protein from Mus musculus (Mouse).